A 485-amino-acid polypeptide reads, in one-letter code: RAC-beta serine/threonine-protein kinase B (485 aa).

The region spanning Met5–Asn109 is the PH domain. O-linked (GlcNAc) serine glycosylation is found at Ser132 and Ser135. The Protein kinase domain occupies Phe156–Phe413. ATP-binding positions include Leu162 to Val170 and Lys185. Asp279 (proton acceptor) is an active-site residue. The O-linked (GlcNAc) threonine glycan is linked to Thr310. A Phosphothreonine modification is found at Thr313. O-linked (GlcNAc) threonine glycosylation occurs at Thr317. The 72-residue stretch at Ala414–Glu485 folds into the AGC-kinase C-terminal domain. Residues Leu454–Glu485 are disordered. Over residues Asp458 to Pro472 the composition is skewed to basic and acidic residues. Ser478 carries the post-translational modification Phosphoserine. O-linked (GlcNAc) serine; alternate glycosylation occurs at Ser478.

This sequence belongs to the protein kinase superfamily. AGC Ser/Thr protein kinase family. RAC subfamily. Post-translationally, phosphorylation on Thr-313 and Ser-478 is required for full activity. Phosphorylation of the activation loop at Thr-313 by PDPK1/PDK1 is a prerequisite for full activation. Phosphorylation by mTORC2 at Ser-478 in response to growth factors plays a key role in AKT1 activation by facilitating subsequent phosphorylation of the activation loop by PDPK1/PDK1.

The enzyme catalyses L-seryl-[protein] + ATP = O-phospho-L-seryl-[protein] + ADP + H(+). It carries out the reaction L-threonyl-[protein] + ATP = O-phospho-L-threonyl-[protein] + ADP + H(+). Two specific sites, one in the kinase domain (Thr-313) and the other in the C-terminal regulatory region (Ser-478), need to be phosphorylated for its full activation. In terms of biological role, akt2-b is one of several closely related serine/threonine-protein kinases known as the AKT kinase, and which regulate many processes including metabolism, proliferation, cell survival, growth and angiogenesis. This is mediated through serine and/or threonine phosphorylation of a range of downstream substrates. Over 100 substrate candidates have been reported so far, but for most of them, no isoform specificity has been reported. May be involved in the inhibition of ciliogenesis. The sequence is that of RAC-beta serine/threonine-protein kinase B (akt2-b) from Xenopus laevis (African clawed frog).